Reading from the N-terminus, the 400-residue chain is Serine/threonine-protein kinase AFC3 (400 aa).

Residues 1–29 (MIANGFESMDKERVRKRPRMTWDEAPAEP) form a disordered region. The 326-residue stretch at 71–396 (YKILSKMGEG…ANEALDHPFF (326 aa)) folds into the Protein kinase domain. ATP contacts are provided by residues 77 to 85 (MGEGTFGRV) and lysine 100. Aspartate 196 (proton acceptor) is an active-site residue.

This sequence belongs to the protein kinase superfamily. CMGC Ser/Thr protein kinase family. Lammer subfamily.

The enzyme catalyses L-seryl-[protein] + ATP = O-phospho-L-seryl-[protein] + ADP + H(+). It carries out the reaction L-threonyl-[protein] + ATP = O-phospho-L-threonyl-[protein] + ADP + H(+). It catalyses the reaction L-tyrosyl-[protein] + ATP = O-phospho-L-tyrosyl-[protein] + ADP + H(+). This Arabidopsis thaliana (Mouse-ear cress) protein is Serine/threonine-protein kinase AFC3 (AFC3).